The primary structure comprises 660 residues: Probable Xaa-Pro aminopeptidase PTRG_10574 (660 aa).

The Mn(2+) site is built by aspartate 274, aspartate 285, glutamate 435, and glutamate 476. The interval 641 to 660 (SAGSGSTPLWKPHNKQDKKN) is disordered.

Belongs to the peptidase M24B family. The cofactor is Mn(2+).

It carries out the reaction Release of any N-terminal amino acid, including proline, that is linked to proline, even from a dipeptide or tripeptide.. In terms of biological role, catalyzes the removal of a penultimate prolyl residue from the N-termini of peptides. This Pyrenophora tritici-repentis (strain Pt-1C-BFP) (Wheat tan spot fungus) protein is Probable Xaa-Pro aminopeptidase PTRG_10574.